Consider the following 78-residue polypeptide: MSRVCQVSGKRVQTGNNVSHANNKTRRRFLPNLHERRFWVASENRWVKLRVSAHALRTIDKNGIDSVLAELRARGEKV.

Residues 1-23 (MSRVCQVSGKRVQTGNNVSHANN) are disordered. Residues 11–22 (RVQTGNNVSHAN) show a composition bias toward polar residues.

The protein belongs to the bacterial ribosomal protein bL28 family.

This Stenotrophomonas maltophilia (strain R551-3) protein is Large ribosomal subunit protein bL28.